Consider the following 905-residue polypeptide: Protein translocase subunit SecA (905 aa).

Residues Gln-87, 105-109 (GEGKT), and Asp-512 each bind ATP. The interval 840-905 (AQRQQEAMAQ…HCHGSKARYA (66 aa)) is disordered. Residues 843-852 (QQEAMAQAES) show a composition bias toward low complexity. The span at 853 to 862 (ENYRTADHQA) shows a compositional bias: basic and acidic residues. A compositionally biased stretch (polar residues) spans 863 to 874 (EAQQSESLTEEQ). Zn(2+) contacts are provided by Cys-886, Cys-888, Cys-897, and His-898. Residues 892–905 (KKYKHCHGSKARYA) show a composition bias toward basic residues.

This sequence belongs to the SecA family. Monomer and homodimer. Part of the essential Sec protein translocation apparatus which comprises SecA, SecYEG and auxiliary proteins SecDF-YajC and YidC. Requires Zn(2+) as cofactor.

The protein resides in the cell inner membrane. The protein localises to the cytoplasm. The catalysed reaction is ATP + H2O + cellular proteinSide 1 = ADP + phosphate + cellular proteinSide 2.. Its function is as follows. Part of the Sec protein translocase complex. Interacts with the SecYEG preprotein conducting channel. Has a central role in coupling the hydrolysis of ATP to the transfer of proteins into and across the cell membrane, serving both as a receptor for the preprotein-SecB complex and as an ATP-driven molecular motor driving the stepwise translocation of polypeptide chains across the membrane. This is Protein translocase subunit SecA from Actinobacillus pleuropneumoniae serotype 3 (strain JL03).